The chain runs to 239 residues: Ribosomal RNA small subunit methyltransferase G (239 aa).

S-adenosyl-L-methionine-binding positions include Gly77, Phe82, 128-129, and Arg147; that span reads AE. Residues 216-239 are disordered; the sequence is EKKKQTPKKYPRKPGTPNKSPIEG.

It belongs to the methyltransferase superfamily. RNA methyltransferase RsmG family.

It is found in the cytoplasm. In terms of biological role, specifically methylates the N7 position of guanine in position 535 of 16S rRNA. The chain is Ribosomal RNA small subunit methyltransferase G from Bacillus pumilus (strain SAFR-032).